A 315-amino-acid chain; its full sequence is Ester hydrolase C11orf54 homolog (315 aa).

Zn(2+) is bound by residues His-266, His-268, and His-278.

In terms of assembly, monomer. Zn(2+) is required as a cofactor.

Its subcellular location is the nucleus. It localises to the cytoplasm. Its function is as follows. Exhibits ester hydrolase activity on the substrate p-nitrophenyl acetate, in vitro. Regulates DNA damage and repair by regulating HIF1A degradation via chaperone-mediated autophagy (CMA). This Mus musculus (Mouse) protein is Ester hydrolase C11orf54 homolog.